The chain runs to 91 residues: Potassium channel toxin MeuTXK-beta-1 (91 aa).

The N-terminal stretch at 1 to 19 (MQRNLVVLLFLGMVALSSC) is a signal peptide. In terms of domain architecture, BetaSPN-type CS-alpha/beta spans 54-91 (QFGCPAYQGYCDDHCQDIEKKEGFCHGFKCKCGIPMGF). Intrachain disulfides connect Cys57-Cys78, Cys64-Cys83, and Cys68-Cys85.

In terms of tissue distribution, expressed by the venom gland.

The protein resides in the secreted. Its function is as follows. Has a low affinity binding to potassium channels of rat brain synaptosomes. Displays weak antibacterial activity against Stenotrophomonas sp. Strongly inhibits the development of the Plasmodium berghei ookinetes. Displays slight hemolytic effect on mouse erythrocytes. Induces cytolysis on Xenopus oocytes at high concentrations. Is not toxic towards mice and towards the insect Tenebrio molitor. This is Potassium channel toxin MeuTXK-beta-1 from Mesobuthus eupeus (Lesser Asian scorpion).